Reading from the N-terminus, the 704-residue chain is Histone-lysine N-methyltransferase, H3 lysine-9 specific SUVH1 (704 aa).

Disordered regions lie at residues 1–21 (MEQG…TRVL) and 68–176 (PFVA…QAEG). Polar residues-rich tracts occupy residues 80-90 (ESSQQTPSGVP) and 109-121 (SFRT…GNSG). Residues 159-170 (GKKRGRPKKPRR) are compositionally biased toward basic residues. Residues 265 to 412 (GNAPGIEVGD…CNVFKYKLLR (148 aa)) enclose the YDG domain. One can recognise a Pre-SET domain in the interval 487–548 (PSCHCVGGCQ…NCRNRMSQGG (62 aa)). C489, C491, C495, C502, C504, C530, C534, C536, and C540 together coordinate Zn(2+). The 131-residue stretch at 551–681 (ARLEVFKTKN…PMQELTFDYG (131 aa)) folds into the SET domain. Residues 561 to 563 (RGW), D593, Y595, R635, and 638 to 639 (NH) each bind S-adenosyl-L-methionine. C641, C692, C694, and C699 together coordinate Zn(2+). Residues 688–704 (RRKKCLCGSLNCRGYFY) enclose the Post-SET domain.

Belongs to the class V-like SAM-binding methyltransferase superfamily. Histone-lysine methyltransferase family. Suvar3-9 subfamily. In terms of assembly, interacts with LHP1. In terms of tissue distribution, expressed in roots, stems, leaves and flowers.

It is found in the nucleus. The protein resides in the chromosome. The catalysed reaction is N(6)-methyl-L-lysyl(27)-[histone H3] + S-adenosyl-L-methionine = N(6),N(6)-dimethyl-L-lysyl(27)-[histone H3] + S-adenosyl-L-homocysteine + H(+). It catalyses the reaction L-lysyl(9)-[histone H3] + 2 S-adenosyl-L-methionine = N(6),N(6)-dimethyl-L-lysyl(9)-[histone H3] + 2 S-adenosyl-L-homocysteine + 2 H(+). The enzyme catalyses L-lysyl(27)-[histone H3] + S-adenosyl-L-methionine = N(6)-methyl-L-lysyl(27)-[histone H3] + S-adenosyl-L-homocysteine + H(+). Its function is as follows. Histone methyltransferase. Methylates in vitro both 'Lys-9' and 'Lys-27' of histone H3. Required for in vivo dimethylation of 'Lys-9'. H3 'Lys-9' methylation represents a specific tag for epigenetic control for plant development and transcriptional repression. The protein is Histone-lysine N-methyltransferase, H3 lysine-9 specific SUVH1 (SUVH1) of Nicotiana tabacum (Common tobacco).